We begin with the raw amino-acid sequence, 555 residues long: MATDTSQGELVHPKALPLIVGAQLIHADKLGEKVEDNTMPIRRAVNSTRETPPKSKLAEGVEEKPEPDVSSEESISTVEEQENETPPATSSETEQPKGQPENEEKEENKPSEETKKDEKDQSKEKEKKVKKTIPSWATLSASQLARAQKQTPMASSPRPKMDAILTEAIKACFQKSGASVVAIRKYIIHKYPSLELERRGYLLKQALKRELNRGVIKQVKGKGASGSFVVVQKSRKPPQKSRNRKNRSSAVDPEPQVKLEDILPLAFTRLCEPKEASYSLIRKYVSQYYPKLRVDIRPQLLKNALQRAVERGQLEQITGKGASGTFQLKKSGEKPLLGGSLMEYAILSAIAAMNEPKTCSTTALKKYVLENHPGTNSNYQMHLLKKTLQRCEKNGWMEQISGKGFSGTFQLCFPYYPSPGVLFPKKEPDDSKDEDEDEDEDDSSEEDSEDEEPPPKRRLQKKTPVKSPGKAAAMKQRGSKLAPKVPAAQRGKTRPLPKKAPPKAKSPAKKARPSPSVIKKPSGSSSKKPAASVRKEVKLPGKGKSTMKKSFKAKK.

Ala-2 is modified (N-acetylalanine). Ser-6 carries the post-translational modification Phosphoserine. The interval 29–134 (KLGEKVEDNT…KEKKVKKTIP (106 aa)) is disordered. Thr-51 carries the phosphothreonine modification. Basic and acidic residues predominate over residues 51–67 (TPPKSKLAEGVEEKPEP). Residue Lys-64 forms a Glycyl lysine isopeptide (Lys-Gly) (interchain with G-Cter in SUMO2) linkage. Thr-85 is subject to Phosphothreonine. Lys-97 participates in a covalent cross-link: Glycyl lysine isopeptide (Lys-Gly) (interchain with G-Cter in SUMO2). A compositionally biased stretch (basic and acidic residues) spans 100-127 (PENEEKEENKPSEETKKDEKDQSKEKEK). Phosphoserine is present on residues Ser-142, Ser-155, and Ser-156. Residues 157–232 (PRPKMDAILT…GASGSFVVVQ (76 aa)) enclose the H15 1 domain. At Lys-190 the chain carries N6-acetyllysine. The interval 227–254 (SFVVVQKSRKPPQKSRNRKNRSSAVDPE) is disordered. Residues 233-247 (KSRKPPQKSRNRKNR) show a composition bias toward basic residues. A phosphoserine mark is found at Ser-248 and Ser-249. 2 consecutive H15 domains span residues 255–330 (PQVK…QLKK) and 337–413 (LGGS…QLCF). Lys-258 participates in a covalent cross-link: Glycyl lysine isopeptide (Lys-Gly) (interchain with G-Cter in SUMO2). The tract at residues 422-555 (LFPKKEPDDS…TMKKSFKAKK (134 aa)) is disordered. The segment covering 430-452 (DSKDEDEDEDEDDSSEEDSEDEE) has biased composition (acidic residues). Ser-443, Ser-444, and Ser-448 each carry phosphoserine. Basic residues predominate over residues 491–512 (GKTRPLPKKAPPKAKSPAKKAR). Positions 513 to 532 (PSPSVIKKPSGSSSKKPAAS) are enriched in low complexity. Residues 545 to 555 (STMKKSFKAKK) are compositionally biased toward basic residues.

As to quaternary structure, interacts (via PxVxL motif) with CBX5.

It localises to the nucleus. Its subcellular location is the chromosome. Functionally, component of heterochromatin that maintains heterochromatin integrity during G1/S progression and regulates the duration of G1 phase to critically influence cell proliferative capacity. May play a role in hypoxia-induced oncogenesis. The chain is Heterochromatin protein 1-binding protein 3 (HP1BP3) from Bos taurus (Bovine).